The following is a 203-amino-acid chain: MHQIYSCSDENIEVFTTVIPSKVTSPARRRVKSSQHLLTKNVVIESDLYAPRPVELLPHRTDRRDGEGRWSGRFQNPRLQGPHPAKTPARPVGTSEPKSANLCGNRTYGKALMPPVARISVKAPTVLEAAAPGSENVAVLTRGSRHLKKMTEEFPTLPQGAEASLPLTGSAPCGMPSILRKMWTRHKKKSEYVGATNSAFEAD.

Residues 59–70 (HRTDRRDGEGRW) show a composition bias toward basic and acidic residues. Residues 59 to 101 (HRTDRRDGEGRWSGRFQNPRLQGPHPAKTPARPVGTSEPKSAN) are disordered.

The protein belongs to the vexin family.

It is found in the cell membrane. It localises to the nucleus. In terms of biological role, required for neurogenesis in the neural plate and retina. Strongly cooperates with neural bHLH factors to promote neurogenesis. This Bos taurus (Bovine) protein is Vexin.